A 99-amino-acid polypeptide reads, in one-letter code: DNA-binding protein HmvA (99 aa).

The tract at residues 52-55 (KTIK) is interaction with DNA.

Belongs to the archaeal histone HMF family. As to quaternary structure, homodimer or heterodimer with another histone. Dimers then assemble into higher oligomers, with the DNA wrapped around the protein core.

The protein localises to the cytoplasm. It localises to the chromosome. Binds and compact DNA (95 to 150 base pairs) to form nucleosome-like structures that contain positive DNA supercoils. Increases the resistance of DNA to thermal denaturation (in vitro). The polypeptide is DNA-binding protein HmvA (hmvA) (Methanococcus voltae).